Reading from the N-terminus, the 88-residue chain is Large ribosomal subunit protein bL27 (88 aa).

The disordered stretch occupies residues 1–23 (MAHKKAGGSSRNGRDSAGRRLGV).

This sequence belongs to the bacterial ribosomal protein bL27 family.

This is Large ribosomal subunit protein bL27 from Methylorubrum populi (strain ATCC BAA-705 / NCIMB 13946 / BJ001) (Methylobacterium populi).